The following is a 442-amino-acid chain: UDP-N-acetylmuramoylalanine--D-glutamate ligase (442 aa).

Gly-113–Thr-119 contributes to the ATP binding site.

Belongs to the MurCDEF family.

It localises to the cytoplasm. It catalyses the reaction UDP-N-acetyl-alpha-D-muramoyl-L-alanine + D-glutamate + ATP = UDP-N-acetyl-alpha-D-muramoyl-L-alanyl-D-glutamate + ADP + phosphate + H(+). Its pathway is cell wall biogenesis; peptidoglycan biosynthesis. Functionally, cell wall formation. Catalyzes the addition of glutamate to the nucleotide precursor UDP-N-acetylmuramoyl-L-alanine (UMA). The polypeptide is UDP-N-acetylmuramoylalanine--D-glutamate ligase (Coxiella burnetii (strain CbuG_Q212) (Coxiella burnetii (strain Q212))).